The primary structure comprises 299 residues: Pantothenate synthetase (299 aa).

Residue 41–48 coordinates ATP; it reads MGALHEGH. Histidine 48 functions as the Proton donor in the catalytic mechanism. Residue glutamine 72 participates in (R)-pantoate binding. A beta-alanine-binding site is contributed by glutamine 72. 158-161 contributes to the ATP binding site; it reads GQKD. Glutamine 164 is a binding site for (R)-pantoate. Residues valine 187 and 195-198 each bind ATP; that span reads MSSR.

Belongs to the pantothenate synthetase family. In terms of assembly, homodimer.

It is found in the cytoplasm. It carries out the reaction (R)-pantoate + beta-alanine + ATP = (R)-pantothenate + AMP + diphosphate + H(+). It participates in cofactor biosynthesis; (R)-pantothenate biosynthesis; (R)-pantothenate from (R)-pantoate and beta-alanine: step 1/1. Its function is as follows. Catalyzes the condensation of pantoate with beta-alanine in an ATP-dependent reaction via a pantoyl-adenylate intermediate. In Acidobacterium capsulatum (strain ATCC 51196 / DSM 11244 / BCRC 80197 / JCM 7670 / NBRC 15755 / NCIMB 13165 / 161), this protein is Pantothenate synthetase.